Reading from the N-terminus, the 245-residue chain is tRNA pseudouridine synthase A (245 aa).

Catalysis depends on Asp52, which acts as the Nucleophile. Residue Tyr110 coordinates substrate.

Belongs to the tRNA pseudouridine synthase TruA family. Homodimer.

It catalyses the reaction uridine(38/39/40) in tRNA = pseudouridine(38/39/40) in tRNA. Functionally, formation of pseudouridine at positions 38, 39 and 40 in the anticodon stem and loop of transfer RNAs. This chain is tRNA pseudouridine synthase A, found in Ruminiclostridium cellulolyticum (strain ATCC 35319 / DSM 5812 / JCM 6584 / H10) (Clostridium cellulolyticum).